Reading from the N-terminus, the 397-residue chain is Serpin B10 (397 aa).

A Nuclear localization signal motif is present at residues 74–77 (KKRK).

This sequence belongs to the serpin family. Ov-serpin subfamily.

The protein resides in the nucleus. It localises to the cytoplasm. Functionally, protease inhibitor that may play a role in the regulation of protease activities during hematopoiesis and apoptosis induced by TNF. May regulate protease activities in the cytoplasm and in the nucleus. The sequence is that of Serpin B10 (SERPINB10) from Rhinolophus ferrumequinum (Greater horseshoe bat).